We begin with the raw amino-acid sequence, 253 residues long: 5'-nucleotidase SurE (253 aa).

Residues Asp-8, Asp-9, Ser-40, and Asn-93 each contribute to the a divalent metal cation site.

This sequence belongs to the SurE nucleotidase family. The cofactor is a divalent metal cation.

The protein resides in the cytoplasm. It catalyses the reaction a ribonucleoside 5'-phosphate + H2O = a ribonucleoside + phosphate. Functionally, nucleotidase that shows phosphatase activity on nucleoside 5'-monophosphates. This is 5'-nucleotidase SurE from Methylobacterium nodulans (strain LMG 21967 / CNCM I-2342 / ORS 2060).